Consider the following 233-residue polypeptide: uncharacterized protein (233 aa).

Basic residues predominate over residues 1 to 10; sequence MSSKLSKKKL. Residues 1–90 are disordered; the sequence is MSSKLSKKKL…KRQKGKNNDR (90 aa). Basic and acidic residues predominate over residues 11–56; that stretch reads KSLEYRSKKFDKKSQSLEEHEKKVQQKNEELEKKAADKISRDELPE. A compositionally biased stretch (basic residues) spans 76-85; sequence KTLKSKRQKG. An RRM domain is found at 92–171; that stretch reads VILFVGNLPK…RKINIELTAG (80 aa). 2 stretches are compositionally biased toward basic and acidic residues: residues 194–216 and 224–233; these read MRQR…KAVA and IHPDRLRLLQ. The segment at 194–233 is disordered; that stretch reads MRQRVASEEQQAGEEKMARKAVADEGLESGIHPDRLRLLQ.

The protein resides in the nucleus. Its subcellular location is the nucleolus. This is an uncharacterized protein from Schizosaccharomyces pombe (strain 972 / ATCC 24843) (Fission yeast).